Reading from the N-terminus, the 293-residue chain is 4-diphosphocytidyl-2-C-methyl-D-erythritol kinase (293 aa).

K10 is an active-site residue. 94–104 is an ATP binding site; it reads PVSAGLAGGSS. D136 is a catalytic residue.

This sequence belongs to the GHMP kinase family. IspE subfamily.

It catalyses the reaction 4-CDP-2-C-methyl-D-erythritol + ATP = 4-CDP-2-C-methyl-D-erythritol 2-phosphate + ADP + H(+). It participates in isoprenoid biosynthesis; isopentenyl diphosphate biosynthesis via DXP pathway; isopentenyl diphosphate from 1-deoxy-D-xylulose 5-phosphate: step 3/6. Its function is as follows. Catalyzes the phosphorylation of the position 2 hydroxy group of 4-diphosphocytidyl-2C-methyl-D-erythritol. This Listeria monocytogenes serovar 1/2a (strain ATCC BAA-679 / EGD-e) protein is 4-diphosphocytidyl-2-C-methyl-D-erythritol kinase.